A 48-amino-acid chain; its full sequence is ATP synthase protein 8 (48 aa).

The chain crosses the membrane as a helical span at residues 4 to 24; sequence LVPFYFINILSFGFLIFTVLL.

Belongs to the ATPase protein 8 family. F-type ATPases have 2 components, CF(1) - the catalytic core - and CF(0) - the membrane proton channel.

Its subcellular location is the mitochondrion membrane. In terms of biological role, mitochondrial membrane ATP synthase (F(1)F(0) ATP synthase or Complex V) produces ATP from ADP in the presence of a proton gradient across the membrane which is generated by electron transport complexes of the respiratory chain. F-type ATPases consist of two structural domains, F(1) - containing the extramembraneous catalytic core and F(0) - containing the membrane proton channel, linked together by a central stalk and a peripheral stalk. During catalysis, ATP synthesis in the catalytic domain of F(1) is coupled via a rotary mechanism of the central stalk subunits to proton translocation. Part of the complex F(0) domain. Minor subunit located with subunit a in the membrane. The chain is ATP synthase protein 8 (atp8) from Schizosaccharomyces pombe (strain 972 / ATCC 24843) (Fission yeast).